The primary structure comprises 495 residues: Cytochrome P450 monooxygenase cnsC (495 aa).

Cysteine 434 is a binding site for heme.

This sequence belongs to the cytochrome P450 family. Heme serves as cofactor.

It functions in the pathway alkaloid biosynthesis. Functionally, cytochrome P450 monooxygenase; part of the gene cluster that mediates the biosynthesis of communesins, a prominent class of indole alkaloids with great potential as pharmaceuticals. Communesins are biosynthesized by the coupling of tryptamine and aurantioclavine, two building blocks derived from L-tryptophan. The L-tryptophan decarboxylase cnsB converts L-tryptophan to tryptamine, whereas the tryptophan dimethylallyltransferase cnsF converts L-tryptophan to 4-dimethylallyl tryptophan which is further transformed to aurantioclavine by the aurantioclavine synthase cnsA, probably aided by the catalase cnsD. The cytochrome P450 monooxygenase cnsC catalyzes the heterodimeric coupling between the two different indole moieties, tryptamine and aurantioclavine, to construct vicinal quaternary stereocenters and yield the heptacyclic communesin scaffold. The O-methyltransferase cnsE then methylates the communesin scaffold to produce communesin K, the simplest characterized communesin that contains the heptacyclic core. The dioxygenase cnsJ converts communesin K into communesin I. Acylation to introduce the hexadienyl group at position N16 of communesin I by the acyltransferase cnsK leads to the production of communesin B. The hexadienyl group is produced by the highly reducing polyketide synthase cnsI, before being hydrolytically removed from cnsI by the serine hydrolase cnsH, converted into hexadienyl-CoA by the CoA ligase cnsG, and then transferred to communesin I by cnsK. Surprisingly, cnsK may also be a promiscuous acyltransferase that can tolerate a range of acyl groups, including acetyl-, propionyl-, and butyryl-CoA, which lead to communesins A, G and H respectively. The roles of the alpha-ketoglutarate-dependent dioxygenases cnsM and cnsP have still to be determined. The chain is Cytochrome P450 monooxygenase cnsC from Penicillium expansum (Blue mold rot fungus).